We begin with the raw amino-acid sequence, 215 residues long: Probable transaldolase (215 aa).

Catalysis depends on Lys-83, which acts as the Schiff-base intermediate with substrate.

This sequence belongs to the transaldolase family. Type 3B subfamily.

It localises to the cytoplasm. The enzyme catalyses D-sedoheptulose 7-phosphate + D-glyceraldehyde 3-phosphate = D-erythrose 4-phosphate + beta-D-fructose 6-phosphate. Its pathway is carbohydrate degradation; pentose phosphate pathway; D-glyceraldehyde 3-phosphate and beta-D-fructose 6-phosphate from D-ribose 5-phosphate and D-xylulose 5-phosphate (non-oxidative stage): step 2/3. Functionally, transaldolase is important for the balance of metabolites in the pentose-phosphate pathway. The protein is Probable transaldolase of Streptococcus agalactiae serotype III (strain NEM316).